The primary structure comprises 407 residues: Ribonuclease Z (407 aa).

A ribonuclease Z region spans residues 1–308; the sequence is MEITFLGTSS…QDFLHYAIPR (308 aa). Residues histidine 62, histidine 64, aspartate 66, histidine 67, histidine 139, aspartate 210, and histidine 268 each contribute to the Zn(2+) site. Aspartate 66 (proton acceptor) is an active-site residue. Positions 309–407 are unknown; the sequence is DGQICAEMPP…VDWSALNVLF (99 aa).

It belongs to the RNase Z family. In terms of assembly, homodimer. Zn(2+) serves as cofactor.

It carries out the reaction Endonucleolytic cleavage of RNA, removing extra 3' nucleotides from tRNA precursor, generating 3' termini of tRNAs. A 3'-hydroxy group is left at the tRNA terminus and a 5'-phosphoryl group is left at the trailer molecule.. Its function is as follows. Zinc phosphodiesterase, which displays some tRNA 3'-processing endonuclease activity. Probably involved in tRNA maturation, by removing a 3'-trailer from precursor tRNA. In Thermosynechococcus vestitus (strain NIES-2133 / IAM M-273 / BP-1), this protein is Ribonuclease Z (rnz).